A 352-amino-acid polypeptide reads, in one-letter code: MTQISERFLVQAHLDAKQPRTLSPAEQARYRADIAAELKKQDAVLVAHYYCDPVIQALAEETGGCVADSLEMARFSNNHAASTVLVAGVRFMGETAKILNPEKRVFMPTLEATCSLDVGCPVDEFSAFCDQHPERTVVVYANTSAAVKARADWVVTSGCALEIVESLMDNGEKIIWAPDKHLGRYIQRETGADMLLWDGACIVHEEFKSKQLEDMKALYPEAAILVHPESPEAVIELADVVGSTSQMIAAAQRLPNKTFIVATDRGIFYKMQQLCPDKIFIEAPTAGNGAACRSCAHCPWMAMNTLERTLQCLREGSNEIFVDPALIPHAVRPLQRMLDFTQAARLRQAGNA.

Iminosuccinate is bound by residues His-48 and Ser-69. Cys-114 is a [4Fe-4S] cluster binding site. Iminosuccinate is bound by residues 140–142 (YAN) and Ser-157. Position 201 (Cys-201) interacts with [4Fe-4S] cluster. Residues 227–229 (HPE) and Thr-244 each bind iminosuccinate. Residue Cys-298 coordinates [4Fe-4S] cluster.

The protein belongs to the quinolinate synthase family. Type 1 subfamily. [4Fe-4S] cluster serves as cofactor.

It localises to the cytoplasm. It catalyses the reaction iminosuccinate + dihydroxyacetone phosphate = quinolinate + phosphate + 2 H2O + H(+). It participates in cofactor biosynthesis; NAD(+) biosynthesis; quinolinate from iminoaspartate: step 1/1. Functionally, catalyzes the condensation of iminoaspartate with dihydroxyacetone phosphate to form quinolinate. The chain is Quinolinate synthase from Pseudomonas syringae pv. syringae (strain B728a).